The sequence spans 259 residues: MIRQPFHLVEYSPWPLTSSIGAFTLAIGLASWFHNHGFLCLTLAAFLIIVSMIQWWRDVVREGTYMGHHTSLVTTGLRWGMILFITSEVMFFLAFFWAFFHSSLSPTPEIGCSWPPTGIHPLNPFSVPLLNTAVLLASGVTVTWAHHSLMSGKRIDATQALILTVCLGAYFTFLQAGEYMAAPFSIADSVYGTTFFVATGFHGLHVLIGSSFLAICLARTWSHHFSAGHHFGFEAAAWYWHFVDVVWICLYLCIYWWGS.

7 helical membrane passes run 13–33 (PWPL…ASWF), 36–56 (HGFL…IQWW), 80–100 (GMIL…WAFF), 125–145 (FSVP…VTWA), 160–180 (ALIL…GEYM), 195–215 (FFVA…FLAI), and 237–257 (AWYW…IYWW).

Belongs to the cytochrome c oxidase subunit 3 family. In terms of assembly, component of the cytochrome c oxidase (complex IV, CIV), a multisubunit enzyme composed of a catalytic core of 3 subunits and several supernumerary subunits. The complex exists as a monomer or a dimer and forms supercomplexes (SCs) in the inner mitochondrial membrane with ubiquinol-cytochrome c oxidoreductase (cytochrome b-c1 complex, complex III, CIII).

It is found in the mitochondrion inner membrane. The catalysed reaction is 4 Fe(II)-[cytochrome c] + O2 + 8 H(+)(in) = 4 Fe(III)-[cytochrome c] + 2 H2O + 4 H(+)(out). Functionally, component of the cytochrome c oxidase, the last enzyme in the mitochondrial electron transport chain which drives oxidative phosphorylation. The respiratory chain contains 3 multisubunit complexes succinate dehydrogenase (complex II, CII), ubiquinol-cytochrome c oxidoreductase (cytochrome b-c1 complex, complex III, CIII) and cytochrome c oxidase (complex IV, CIV), that cooperate to transfer electrons derived from NADH and succinate to molecular oxygen, creating an electrochemical gradient over the inner membrane that drives transmembrane transport and the ATP synthase. Cytochrome c oxidase is the component of the respiratory chain that catalyzes the reduction of oxygen to water. Electrons originating from reduced cytochrome c in the intermembrane space (IMS) are transferred via the dinuclear copper A center (CU(A)) of subunit 2 and heme A of subunit 1 to the active site in subunit 1, a binuclear center (BNC) formed by heme A3 and copper B (CU(B)). The BNC reduces molecular oxygen to 2 water molecules using 4 electrons from cytochrome c in the IMS and 4 protons from the mitochondrial matrix. The polypeptide is Cytochrome c oxidase subunit 3 (COIII) (Lumbricus terrestris (Common earthworm)).